Reading from the N-terminus, the 377-residue chain is 4-hydroxy-3-methylbut-2-en-1-yl diphosphate synthase (flavodoxin) (377 aa).

[4Fe-4S] cluster-binding residues include cysteine 272, cysteine 275, cysteine 307, and glutamate 314.

Belongs to the IspG family. Requires [4Fe-4S] cluster as cofactor.

The enzyme catalyses (2E)-4-hydroxy-3-methylbut-2-enyl diphosphate + oxidized [flavodoxin] + H2O + 2 H(+) = 2-C-methyl-D-erythritol 2,4-cyclic diphosphate + reduced [flavodoxin]. The protein operates within isoprenoid biosynthesis; isopentenyl diphosphate biosynthesis via DXP pathway; isopentenyl diphosphate from 1-deoxy-D-xylulose 5-phosphate: step 5/6. Functionally, converts 2C-methyl-D-erythritol 2,4-cyclodiphosphate (ME-2,4cPP) into 1-hydroxy-2-methyl-2-(E)-butenyl 4-diphosphate. This Zymomonas mobilis subsp. mobilis (strain ATCC 31821 / ZM4 / CP4) protein is 4-hydroxy-3-methylbut-2-en-1-yl diphosphate synthase (flavodoxin).